Here is a 1113-residue protein sequence, read N- to C-terminus: Coiled-coil domain-containing protein 158 (1113 aa).

A compositionally biased stretch (polar residues) spans 1-14 (MESKAWESNNEDLL). The disordered stretch occupies residues 1–26 (MESKAWESNNEDLLSSSGVTSNGGSS). Positions 15 to 26 (SSSGVTSNGGSS) are enriched in low complexity. Coiled-coil stretches lie at residues 72-183 (GKEH…LSHE) and 243-833 (VEDQ…QEQE). 2 disordered regions span residues 848 to 902 (LQGP…DPTR) and 955 to 1062 (CHRS…IETT). Composition is skewed to polar residues over residues 867–894 (ASVT…TKAN), 955–974 (CHRS…SSET), 994–1017 (FTFT…SSPK), 1024–1040 (LLTS…SQYR), and 1053–1062 (DSQSPPIETT). Residues 1061-1113 (TTGKTCRKLQNRLESLQTLVEDLQLKNQAMSSMIRNQEKRIQKVKDQEKMLLK) are a coiled coil.

This is Coiled-coil domain-containing protein 158 (CCDC158) from Homo sapiens (Human).